Here is a 212-residue protein sequence, read N- to C-terminus: MYFHALIPFKPVNPKTRLSSVLSQEEREEFARIMLEDVILAVRRTGCSATLLCTSKYECRDALVAIRKEGLNEAINWALPQFHCPALIIMSDLPMVTPGSLQRVISTKADMAIVPGLGGGTNVIFVKKPEKFHVEYYGFSFRRHLQIAEELELTVEIIDSMRMSTDVDEPADLVELMIHGHGNAREWLYEHGFSLSVEDGRVKVHRDGKEVV.

Belongs to the CofC family. In terms of assembly, homodimer.

The catalysed reaction is (2S)-2-phospholactate + GTP + H(+) = (2S)-lactyl-2-diphospho-5'-guanosine + diphosphate. Its pathway is cofactor biosynthesis; coenzyme F420 biosynthesis. Its function is as follows. Guanylyltransferase that catalyzes the activation of (2S)-2-phospholactate (2-PL) as (2S)-lactyl-2-diphospho-5'-guanosine, via the condensation of 2-PL with GTP. It is involved in the biosynthesis of coenzyme F420, a hydride carrier cofactor. This is 2-phospho-L-lactate guanylyltransferase from Methanocorpusculum labreanum (strain ATCC 43576 / DSM 4855 / Z).